A 319-amino-acid chain; its full sequence is Cytochrome c biogenesis protein CcsA (319 aa).

The next 7 membrane-spanning stretches (helical) occupy residues 9 to 29 (ILTHISFSTISIVITIHLITL), 44 to 64 (GMIVTFFSITGFLVSRWASSG), 68 to 88 (LSNLYESLIFLSWALYILHTI), 143 to 163 (MLLSYATLLCGSLLSAAILII), 223 to 243 (VISLGFTLLTIGILCGAVWAN), 257 to 271 (TWAFITWTIFAIYLH), and 286 to 306 (VASIGFLIIWICYFGINLLGI).

It belongs to the CcmF/CycK/Ccl1/NrfE/CcsA family. May interact with Ccs1.

The protein resides in the plastid. The protein localises to the chloroplast thylakoid membrane. Its function is as follows. Required during biogenesis of c-type cytochromes (cytochrome c6 and cytochrome f) at the step of heme attachment. The sequence is that of Cytochrome c biogenesis protein CcsA from Agrostis stolonifera (Creeping bentgrass).